Reading from the N-terminus, the 353-residue chain is MLVSRLTARQQTILSATVRHYVRTAEPVGSKALAEQYGLSVSAATIRNAMGVLERAGLLYQPHTSAGRVPSEGGYRLYVDQLMEPDRALQRQTEQQLSQQLPDRRQSLEALLRGAAQILASLSGYLSLITFPLGLEFQVRHLQLVAIAPHQVLLIVVNDSYETQSALLTLPELDRDLEADQLDRQLLLLSNFLNQELQGRSLQALANLDWPVLGSELQSLAGILQQGLQDLEKRWQPTPATSLLVCGLADLLRQPEFNELQQVQALLELLEGEQTQLLPLMLADPAADQVRVRIGSELPLAPIRSCSLVSAFYCREQQPVGSVSLIGPTRMLYENAVAAVEATASYLSEAIAS.

It belongs to the HrcA family.

In terms of biological role, negative regulator of class I heat shock genes (grpE-dnaK-dnaJ and groELS operons). Prevents heat-shock induction of these operons. This is Heat-inducible transcription repressor HrcA from Synechococcus elongatus (strain ATCC 33912 / PCC 7942 / FACHB-805) (Anacystis nidulans R2).